We begin with the raw amino-acid sequence, 523 residues long: Bifunctional purine biosynthesis protein PurH (523 aa).

Residues 1–152 form the MGS-like domain; the sequence is MSTDDGRRPI…KNHPSAAVVT (152 aa).

Belongs to the PurH family.

It catalyses the reaction (6R)-10-formyltetrahydrofolate + 5-amino-1-(5-phospho-beta-D-ribosyl)imidazole-4-carboxamide = 5-formamido-1-(5-phospho-D-ribosyl)imidazole-4-carboxamide + (6S)-5,6,7,8-tetrahydrofolate. The enzyme catalyses IMP + H2O = 5-formamido-1-(5-phospho-D-ribosyl)imidazole-4-carboxamide. The protein operates within purine metabolism; IMP biosynthesis via de novo pathway; 5-formamido-1-(5-phospho-D-ribosyl)imidazole-4-carboxamide from 5-amino-1-(5-phospho-D-ribosyl)imidazole-4-carboxamide (10-formyl THF route): step 1/1. It participates in purine metabolism; IMP biosynthesis via de novo pathway; IMP from 5-formamido-1-(5-phospho-D-ribosyl)imidazole-4-carboxamide: step 1/1. In Mycobacterium bovis (strain BCG / Pasteur 1173P2), this protein is Bifunctional purine biosynthesis protein PurH.